Reading from the N-terminus, the 253-residue chain is Putative tyrosine-protein phosphatase OCA1 (253 aa).

Residues methionine 1 to glutamine 21 show a composition bias toward basic and acidic residues. A disordered region spans residues methionine 1 to proline 84. Over residues serine 27–alanine 65 the composition is skewed to polar residues. The Tyrosine-protein phosphatase domain occupies asparagine 93–glutamate 249. Cysteine 186 functions as the Phosphocysteine intermediate in the catalytic mechanism.

It belongs to the protein-tyrosine phosphatase family.

The protein resides in the cytoplasm. It carries out the reaction O-phospho-L-tyrosyl-[protein] + H2O = L-tyrosyl-[protein] + phosphate. Functionally, putative tyrosine-protein phosphatase required for protection against superoxide stress. The chain is Putative tyrosine-protein phosphatase OCA1 (OCA1) from Yarrowia lipolytica (strain CLIB 122 / E 150) (Yeast).